A 210-amino-acid polypeptide reads, in one-letter code: Guanylate kinase (210 aa).

Positions 6-184 (GNIYIVVAPS…ARLDLISIVR (179 aa)) constitute a Guanylate kinase-like domain. 13–20 (APSGAGKT) lines the ATP pocket.

It belongs to the guanylate kinase family.

Its subcellular location is the cytoplasm. It carries out the reaction GMP + ATP = GDP + ADP. Functionally, essential for recycling GMP and indirectly, cGMP. The sequence is that of Guanylate kinase from Chromobacterium violaceum (strain ATCC 12472 / DSM 30191 / JCM 1249 / CCUG 213 / NBRC 12614 / NCIMB 9131 / NCTC 9757 / MK).